A 387-amino-acid chain; its full sequence is Exodeoxyribonuclease 7 large subunit (387 aa).

It belongs to the XseA family. In terms of assembly, heterooligomer composed of large and small subunits.

The protein resides in the cytoplasm. The catalysed reaction is Exonucleolytic cleavage in either 5'- to 3'- or 3'- to 5'-direction to yield nucleoside 5'-phosphates.. Bidirectionally degrades single-stranded DNA into large acid-insoluble oligonucleotides, which are then degraded further into small acid-soluble oligonucleotides. In Campylobacter jejuni (strain RM1221), this protein is Exodeoxyribonuclease 7 large subunit.